The chain runs to 317 residues: Acetyl-coenzyme A carboxylase carboxyl transferase subunit alpha (317 aa).

Residues 40-294 (RLQKKSEELT…KARLLTDLED (255 aa)) enclose the CoA carboxyltransferase C-terminal domain.

The protein belongs to the AccA family. Acetyl-CoA carboxylase is a heterohexamer composed of biotin carboxyl carrier protein (AccB), biotin carboxylase (AccC) and two subunits each of ACCase subunit alpha (AccA) and ACCase subunit beta (AccD).

It localises to the cytoplasm. It carries out the reaction N(6)-carboxybiotinyl-L-lysyl-[protein] + acetyl-CoA = N(6)-biotinyl-L-lysyl-[protein] + malonyl-CoA. Its pathway is lipid metabolism; malonyl-CoA biosynthesis; malonyl-CoA from acetyl-CoA: step 1/1. Component of the acetyl coenzyme A carboxylase (ACC) complex. First, biotin carboxylase catalyzes the carboxylation of biotin on its carrier protein (BCCP) and then the CO(2) group is transferred by the carboxyltransferase to acetyl-CoA to form malonyl-CoA. The chain is Acetyl-coenzyme A carboxylase carboxyl transferase subunit alpha from Actinobacillus succinogenes (strain ATCC 55618 / DSM 22257 / CCUG 43843 / 130Z).